Reading from the N-terminus, the 165-residue chain is Protein YELLOW LEAF 1, choloroplastic (165 aa).

Residues 1 to 51 (MPPLATMSSPGSLLLLTPAVYQGIGRNRGGQSQEGQSISSSRSLKTKLSVS) constitute a chloroplast transit peptide. The segment at 71–118 (TQTARRKSFSGPTSPPSGSVKEKVRSPKLDDGGTGFPPFRFGGGGGGG) is disordered. The segment covering 79–89 (FSGPTSPPSGS) has biased composition (low complexity). Residues 90–101 (VKEKVRSPKLDD) show a composition bias toward basic and acidic residues.

As to quaternary structure, interacts with atpB. As to expression, highly expressed in leaves. Expressed in leaf sheaths. Expressed at low levels in stems.

It localises to the plastid. The protein localises to the chloroplast. In terms of biological role, required for photosynthetic protein complex assembly in chloroplast thylakoid membranes during leaf development. Maintains the abundance of the core protein complex PsaA-PsaB of photosystem I (PSI) in the thylakoid membrane. May play a role in the efficient biogenesis of the chloroplast ATP synthase complex, possibly by interacting with the beta subunit atpB. In Oryza sativa subsp. japonica (Rice), this protein is Protein YELLOW LEAF 1, choloroplastic.